We begin with the raw amino-acid sequence, 510 residues long: ATP synthase subunit alpha (510 aa).

Position 170 to 177 (170 to 177) interacts with ATP; the sequence is GDRQTGKT.

Belongs to the ATPase alpha/beta chains family. As to quaternary structure, F-type ATPases have 2 components, CF(1) - the catalytic core - and CF(0) - the membrane proton channel. CF(1) has five subunits: alpha(3), beta(3), gamma(1), delta(1), epsilon(1). CF(0) has three main subunits: a(1), b(2) and c(9-12). The alpha and beta chains form an alternating ring which encloses part of the gamma chain. CF(1) is attached to CF(0) by a central stalk formed by the gamma and epsilon chains, while a peripheral stalk is formed by the delta and b chains.

Its subcellular location is the cell inner membrane. It catalyses the reaction ATP + H2O + 4 H(+)(in) = ADP + phosphate + 5 H(+)(out). Produces ATP from ADP in the presence of a proton gradient across the membrane. The alpha chain is a regulatory subunit. The sequence is that of ATP synthase subunit alpha from Maricaulis maris (strain MCS10) (Caulobacter maris).